The following is a 454-amino-acid chain: MGRTYIVEETVGQYLSNINLQGKAFVSGLLIGQCSSQKDYVILATRTPPKEEQSENLKHPKAKLDNLDEEWATEHACQVSRMLPGGLLVLGVFIITTLELANDFQNALRRLMFAVEKSINRKRLWNFTEEEVSERVTLHICASTKKIFCRTYDIHDPKSSARPADWKYQSGLSSSWLSLECTVHINIHIPLSATSVSYTLEKNTKNGLTRWAKEIENGVYLINGQVKDEDCDLLEGQKKSSRGNTQATSHSFDVRVLTQLLLNSDHRSTATVQICSGSVNLKGAVKCRAYIHSSKPKVKDAVQAVKRDILNTVADRCEMLFEDLLLNEIPEKKDSEKEFHVLPYRVFVPLPGSTVMLCDYKFDDESAEEIRDHFMEMLDHTIQIEDLEIAEETNTACMSSSMNSQASLDNTDDEQPKQPIKTTMLLKIQQNIGVIAAFTVAVLAAGISFHYFSD.

The next 2 helical transmembrane spans lie at 82-102 (MLPGGLLVLGVFIITTLELAN) and 432-452 (IGVIAAFTVAVLAAGISFHYF).

This sequence belongs to the ODR-4 family. Ubiquitously expressed.

It localises to the membrane. Functionally, may play a role in the trafficking of a subset of G-protein coupled receptors. The protein is Protein odr-4 homolog of Homo sapiens (Human).